Here is a 335-residue protein sequence, read N- to C-terminus: Anthranilate phosphoribosyltransferase (335 aa).

Residues glycine 79, 82 to 83 (GD), serine 87, 89 to 92 (NIST), 107 to 115 (KHGNRSITS), and serine 119 contribute to the 5-phospho-alpha-D-ribose 1-diphosphate site. Glycine 79 provides a ligand contact to anthranilate. Serine 91 serves as a coordination point for Mg(2+). Asparagine 110 provides a ligand contact to anthranilate. Residue arginine 165 participates in anthranilate binding. Residues aspartate 224 and glutamate 225 each coordinate Mg(2+).

Belongs to the anthranilate phosphoribosyltransferase family. As to quaternary structure, homodimer. Requires Mg(2+) as cofactor.

The enzyme catalyses N-(5-phospho-beta-D-ribosyl)anthranilate + diphosphate = 5-phospho-alpha-D-ribose 1-diphosphate + anthranilate. It functions in the pathway amino-acid biosynthesis; L-tryptophan biosynthesis; L-tryptophan from chorismate: step 2/5. Its function is as follows. Catalyzes the transfer of the phosphoribosyl group of 5-phosphorylribose-1-pyrophosphate (PRPP) to anthranilate to yield N-(5'-phosphoribosyl)-anthranilate (PRA). The polypeptide is Anthranilate phosphoribosyltransferase (Lactococcus lactis subsp. lactis (strain IL1403) (Streptococcus lactis)).